We begin with the raw amino-acid sequence, 248 residues long: 3-deoxy-manno-octulosonate cytidylyltransferase (248 aa).

Belongs to the KdsB family.

It localises to the cytoplasm. The catalysed reaction is 3-deoxy-alpha-D-manno-oct-2-ulosonate + CTP = CMP-3-deoxy-beta-D-manno-octulosonate + diphosphate. It functions in the pathway nucleotide-sugar biosynthesis; CMP-3-deoxy-D-manno-octulosonate biosynthesis; CMP-3-deoxy-D-manno-octulosonate from 3-deoxy-D-manno-octulosonate and CTP: step 1/1. It participates in bacterial outer membrane biogenesis; lipopolysaccharide biosynthesis. In terms of biological role, activates KDO (a required 8-carbon sugar) for incorporation into bacterial lipopolysaccharide in Gram-negative bacteria. This chain is 3-deoxy-manno-octulosonate cytidylyltransferase, found in Shigella flexneri.